The following is a 546-amino-acid chain: Thermolysin (546 aa).

Residues 1-25 (MNKRAMLGAIGLAFGLMAWPFGASA) form the signal peptide. Residues 26-228 (KEKSMVWNEQ…EAKPGGGQPV (203 aa)) constitute a propeptide, activation peptide. Ca(2+)-binding residues include D287, D289, Q291, and D368. Residue H372 participates in Zn(2+) binding. E373 is an active-site residue. Zn(2+) is bound by residues H376 and E396. Residues E407, N413, D415, E417, E420, Y423, T424, I427, and D430 each coordinate Ca(2+). Residue H461 is the Proton donor of the active site.

This sequence belongs to the peptidase M4 family. Ca(2+) serves as cofactor. It depends on Zn(2+) as a cofactor.

It is found in the secreted. It catalyses the reaction Preferential cleavage: Xaa-|-Leu &gt; Xaa-|-Phe.. Extracellular zinc metalloprotease. The protein is Thermolysin of Alicyclobacillus acidocaldarius subsp. acidocaldarius (Bacillus acidocaldarius).